A 261-amino-acid polypeptide reads, in one-letter code: MEMO1 family protein AF_2310 (261 aa).

Belongs to the MEMO1 family.

This Archaeoglobus fulgidus (strain ATCC 49558 / DSM 4304 / JCM 9628 / NBRC 100126 / VC-16) protein is MEMO1 family protein AF_2310.